A 330-amino-acid chain; its full sequence is Pantothenate synthetase 2 (330 aa).

His55 acts as the Proton donor in catalysis. ATP contacts are provided by residues 167–170 (GEKD), Val196, and 204–207 (ASSR).

This sequence belongs to the pantothenate synthetase family. Homodimer.

The protein resides in the cytoplasm. It carries out the reaction (R)-pantoate + beta-alanine + ATP = (R)-pantothenate + AMP + diphosphate + H(+). It functions in the pathway cofactor biosynthesis; (R)-pantothenate biosynthesis; (R)-pantothenate from (R)-pantoate and beta-alanine: step 1/1. Its function is as follows. Catalyzes the condensation of pantoate with beta-alanine in an ATP-dependent reaction via a pantoyl-adenylate intermediate. This is Pantothenate synthetase 2 from Frankia alni (strain DSM 45986 / CECT 9034 / ACN14a).